Consider the following 210-residue polypeptide: Chloramphenicol acetyltransferase (210 aa).

The active site involves histidine 79.

Belongs to the transferase hexapeptide repeat family.

The catalysed reaction is chloramphenicol + acetyl-CoA = chloramphenicol 3-acetate + CoA. Functionally, this enzyme is an effector of chloramphenicol resistance in bacteria. The chain is Chloramphenicol acetyltransferase (catB4) from Klebsiella aerogenes (Enterobacter aerogenes).